The primary structure comprises 376 residues: Cobalt-precorrin-5B C(1)-methyltransferase (376 aa).

This sequence belongs to the CbiD family.

The catalysed reaction is Co-precorrin-5B + S-adenosyl-L-methionine = Co-precorrin-6A + S-adenosyl-L-homocysteine. It participates in cofactor biosynthesis; adenosylcobalamin biosynthesis; cob(II)yrinate a,c-diamide from sirohydrochlorin (anaerobic route): step 6/10. In terms of biological role, catalyzes the methylation of C-1 in cobalt-precorrin-5B to form cobalt-precorrin-6A. This chain is Cobalt-precorrin-5B C(1)-methyltransferase, found in Bradyrhizobium sp. (strain BTAi1 / ATCC BAA-1182).